Reading from the N-terminus, the 701-residue chain is Ephexin-1 (701 aa).

Basic and acidic residues-rich tracts occupy residues 1 to 11 and 26 to 48; these read METKNSEDQGK and GPAE…EEPR. Residues 1–141 are disordered; it reads METKNSEDQG…TPEECPALTD (141 aa). A regulatory region; modulates activity toward RHOA, RAC1 and CDC42 region spans residues 1–264; the sequence is METKNSEDQG…LDILQPEETK (264 aa). The span at 120-132 shows a compositional bias: polar residues; sequence ASESSSTPGNGTT. Position 172 is a phosphotyrosine (Y172). Residues 187–226 form a disordered region; that stretch reads RRQQDAEIQGNSDGSQAGEDNAEEEEEEEEEPASPPERRA. Residues 206–218 show a composition bias toward acidic residues; that stretch reads DNAEEEEEEEEEP. Residues 264–448 enclose the DH domain; that stretch reads KLQEAMFELV…EMVVKACNEG (185 aa). The 113-residue stretch at 480 to 592 folds into the PH domain; sequence WLLKQGELQQ…WMTSLAPNRR (113 aa). Residues 603 to 664 enclose the SH3 domain; sequence LDCPQVQCVH…PSSMTEEILN (62 aa). Basic and acidic residues predominate over residues 679 to 690; the sequence is HKMEDPQRSQNK. The interval 679-701 is disordered; the sequence is HKMEDPQRSQNKDRRKLGSRNRQ. A compositionally biased stretch (basic residues) spans 691-701; that stretch reads DRRKLGSRNRQ.

In terms of assembly, interacts with CDK5R1 and EPHA4; activated by EPHA4 through the CDK5 kinase. Phosphorylation by CDK5 upon EPHA4 activation by EFNA1 may regulate dendritic spine morphogenesis. Src-dependent phosphorylation at Tyr-172 upon EPHA4 activation increases the guanine exchange factor activity toward RHOA. In terms of tissue distribution, expressed in telencephalic neurons (at protein level). Expressed in brain, spinal cord and testis.

It is found in the cytoplasm. The protein localises to the membrane. It localises to the cell projection. Its subcellular location is the growth cone. In terms of biological role, acts as a guanine nucleotide exchange factor (GEF) which differentially activates the GTPases RHOA, RAC1 and CDC42. Plays a role in axon guidance regulating ephrin-induced growth cone collapse and dendritic spine morphogenesis. Upon activation by ephrin through EPHA4, the GEF activity switches toward RHOA resulting in its activation. Activated RHOA promotes cone retraction at the expense of RAC1- and CDC42-stimulated growth cone extension. The protein is Ephexin-1 (Ngef) of Rattus norvegicus (Rat).